Consider the following 101-residue polypeptide: Apolipoprotein C-II (101 aa).

The N-terminal stretch at 1-22 (MGTRYFLVGFLILLVLGFEVQG) is a signal peptide. Residues 66-74 (AVDEKIRDI) are lipid binding. The tract at residues 78-101 (STAAVTTYAGIITDQVFSVLSGKD) is lipoprotein lipase cofactor.

Belongs to the apolipoprotein C2 family. Post-translationally, proapolipoprotein C-II is synthesized as a sialic acid containing glycoprotein which is subsequently desialylated prior to its proteolytic processing. In terms of processing, proapolipoprotein C-II undergoes proteolytic cleavage of its N-terminal hexapeptide to generate apolipoprotein C-II. In bovine, proapolipoprotein C-II was found to be the minor form whereas apolipoprotein C-II was found to be the major form in plasma.

It localises to the secreted. Functionally, component of chylomicrons, very low-density lipoproteins (VLDL), low-density lipoproteins (LDL), and high-density lipoproteins (HDL) in plasma. Plays an important role in lipoprotein metabolism as an activator of lipoprotein lipase. Both proapolipoprotein C-II and apolipoprotein C-II can activate lipoprotein lipase. The chain is Apolipoprotein C-II (APOC2) from Bos taurus (Bovine).